The primary structure comprises 132 residues: 3'-dehydrocarminate deglycosidase beta subunit (132 aa).

Belongs to the C-glycoside deglycosidase beta subunit family. In terms of assembly, heterodimer composed of an alpha subunit (CarB) and a beta subunit (CarC). Mg(2+) serves as cofactor.

The enzyme catalyses 3'-dehydrocarminate + H(+) = kermesate + 1,5-anhydro-D-erythro-hex-1-en-3-ulose. Activity is strongly reduced in the presence of chelating agents. In terms of biological role, carbon-carbon bond-cleaving enzyme which participates in a carminate degradation pathway. Cleaves the C-C bond in 3'-dehydrocarminate to form kermesate. Also shows weak activity with other C-glycosides, such as 3''-dehydropuerarin (3''-oxo-puerarin), 3''-dehydroisoorientin (3''-oxo-homoorientin) and 3'-dehydromangiferin (3'-oxo-mangiferin). The polypeptide is 3'-dehydrocarminate deglycosidase beta subunit (Microbacterium sp).